The primary structure comprises 338 residues: Lipoate-protein ligase A (338 aa).

Positions 29-216 (PATQRVLFLW…AFFAHYGERV (188 aa)) constitute a BPL/LPL catalytic domain. ATP contacts are provided by residues Arg-71, 76–79 (GAVF), and Lys-134. Lys-134 contributes to the (R)-lipoate binding site.

This sequence belongs to the LplA family. Monomer.

The protein resides in the cytoplasm. It catalyses the reaction L-lysyl-[lipoyl-carrier protein] + (R)-lipoate + ATP = N(6)-[(R)-lipoyl]-L-lysyl-[lipoyl-carrier protein] + AMP + diphosphate + H(+). The protein operates within protein modification; protein lipoylation via exogenous pathway; protein N(6)-(lipoyl)lysine from lipoate: step 1/2. It participates in protein modification; protein lipoylation via exogenous pathway; protein N(6)-(lipoyl)lysine from lipoate: step 2/2. Functionally, catalyzes both the ATP-dependent activation of exogenously supplied lipoate to lipoyl-AMP and the transfer of the activated lipoyl onto the lipoyl domains of lipoate-dependent enzymes. The polypeptide is Lipoate-protein ligase A (Salmonella schwarzengrund (strain CVM19633)).